A 352-amino-acid chain; its full sequence is Alanine racemase (352 aa).

K33 serves as the catalytic Proton acceptor; specific for D-alanine. K33 carries the N6-(pyridoxal phosphate)lysine modification. Residue R129 coordinates substrate. The active-site Proton acceptor; specific for L-alanine is Y250. M298 serves as a coordination point for substrate.

The protein belongs to the alanine racemase family. Pyridoxal 5'-phosphate serves as cofactor.

The enzyme catalyses L-alanine = D-alanine. Its pathway is amino-acid biosynthesis; D-alanine biosynthesis; D-alanine from L-alanine: step 1/1. Catalyzes the interconversion of L-alanine and D-alanine. May also act on other amino acids. This is Alanine racemase (alr) from Neisseria meningitidis serogroup C / serotype 2a (strain ATCC 700532 / DSM 15464 / FAM18).